The primary structure comprises 296 residues: Probable ribosomal RNA small subunit methyltransferase A (296 aa).

Residues 1–16 (MTDATSGSDPDSTTPV) are compositionally biased toward polar residues. Residues 1-25 (MTDATSGSDPDSTTPVDLTGEDFRD) form a disordered region. Residues His44, Leu46, Gly72, Glu93, Asp121, and Asn136 each coordinate S-adenosyl-L-methionine.

It belongs to the class I-like SAM-binding methyltransferase superfamily. rRNA adenine N(6)-methyltransferase family. RsmA subfamily.

The protein localises to the cytoplasm. Specifically dimethylates two adjacent adenosines in the loop of a conserved hairpin near the 3'-end of 16S rRNA in the 30S particle. May play a critical role in biogenesis of 30S subunits. This is Probable ribosomal RNA small subunit methyltransferase A from Haloquadratum walsbyi (strain DSM 16790 / HBSQ001).